The primary structure comprises 185 residues: Elongation factor P (185 aa).

It belongs to the elongation factor P family.

It is found in the cytoplasm. The protein operates within protein biosynthesis; polypeptide chain elongation. In terms of biological role, involved in peptide bond synthesis. Stimulates efficient translation and peptide-bond synthesis on native or reconstituted 70S ribosomes in vitro. Probably functions indirectly by altering the affinity of the ribosome for aminoacyl-tRNA, thus increasing their reactivity as acceptors for peptidyl transferase. The chain is Elongation factor P from Paraburkholderia xenovorans (strain LB400).